We begin with the raw amino-acid sequence, 280 residues long: tRNA pseudouridine synthase A (280 aa).

Aspartate 60 functions as the Nucleophile in the catalytic mechanism. Tyrosine 119 contacts substrate.

It belongs to the tRNA pseudouridine synthase TruA family. Homodimer.

The enzyme catalyses uridine(38/39/40) in tRNA = pseudouridine(38/39/40) in tRNA. Formation of pseudouridine at positions 38, 39 and 40 in the anticodon stem and loop of transfer RNAs. This chain is tRNA pseudouridine synthase A, found in Treponema pallidum (strain Nichols).